The chain runs to 196 residues: Histone H1.0 (196 aa).

Disordered regions lie at residues 1–29 (MTEN…PKYS) and 78–196 (SGTL…GRKK). The region spanning 24 to 97 (DHPKYSDMIL…GASGSFRLAK (74 aa)) is the H15 domain. A compositionally biased stretch (basic residues) spans 104 to 196 (PAKKPKKEIK…ASPKKSGRKK (93 aa)).

This sequence belongs to the histone H1/H5 family.

Its subcellular location is the nucleus. The protein resides in the chromosome. Its function is as follows. Histones H1 are necessary for the condensation of nucleosome chains into higher-order structures. The histones H1.0 are found in cells that are in terminal stages of differentiation or that have low rates of cell division. This is Histone H1.0 (h1-0) from Xenopus tropicalis (Western clawed frog).